A 137-amino-acid polypeptide reads, in one-letter code: Small ribosomal subunit protein uS12 (137 aa).

Disordered stretches follow at residues methionine 1–serine 21 and valine 34–lysine 57. A 3-methylthioaspartic acid modification is found at aspartate 102.

This sequence belongs to the universal ribosomal protein uS12 family. As to quaternary structure, part of the 30S ribosomal subunit. Contacts proteins S8 and S17. May interact with IF1 in the 30S initiation complex.

Functionally, with S4 and S5 plays an important role in translational accuracy. In terms of biological role, interacts with and stabilizes bases of the 16S rRNA that are involved in tRNA selection in the A site and with the mRNA backbone. Located at the interface of the 30S and 50S subunits, it traverses the body of the 30S subunit contacting proteins on the other side and probably holding the rRNA structure together. The combined cluster of proteins S8, S12 and S17 appears to hold together the shoulder and platform of the 30S subunit. The polypeptide is Small ribosomal subunit protein uS12 (Streptococcus equi subsp. zooepidemicus (strain H70)).